The following is a 69-amino-acid chain: DNA-directed RNA polymerase subunit epsilon (69 aa).

This sequence belongs to the RNA polymerase subunit epsilon family. RNAP is composed of a core of 2 alpha, a beta and a beta' subunit. The core is associated with a delta subunit, and at least one of epsilon or omega. When a sigma factor is associated with the core the holoenzyme is formed, which can initiate transcription.

It carries out the reaction RNA(n) + a ribonucleoside 5'-triphosphate = RNA(n+1) + diphosphate. A non-essential component of RNA polymerase (RNAP). The polypeptide is DNA-directed RNA polymerase subunit epsilon (Shouchella clausii (strain KSM-K16) (Alkalihalobacillus clausii)).